Consider the following 575-residue polypeptide: Sodium/calcium exchanger NCL2 (575 aa).

3 helical membrane-spanning segments follow: residues 69 to 89 (FLPCTTTAWGNLFLVLAYGFL), 112 to 132 (IVGGLFLPILGALPDALLILV), and 146 to 166 (VLIGMGLLAGSTVMLLTLLWG). N179 carries an N-linked (GlcNAc...) asparagine glycan. The next 2 membrane-spanning stretches (helical) occupy residues 210 to 230 (IMAISILPFIIVQIPKIFKLH) and 237 to 257 (VLIGLIVAALLLLSYCLYQVF). 2 EF-hand domains span residues 297–332 (PNVSVIEKLFHRIDQDNDGKLERGELQAFIVGINFE) and 337–372 (NSNLAADQVMADFDTSRNHFIEKGEFVNGMLRWLDE). An N-linked (GlcNAc...) asparagine glycan is attached at N298. Residues D310, D312, D314, K316, E321, D350, S352, N354, and E361 each contribute to the Ca(2+) site. The next 5 membrane-spanning stretches (helical) occupy residues 417–437 (WTCIKAILLLLLGTAMAAASA), 457–477 (FISFIVMPLATNSSEAVSAII), 494–514 (VYGGVTMNNTLCLAVFLALVY), 522–542 (FSSEVLIILLVCIIMGLFTSF), and 548–568 (LWTCFVAFLLYPLSLIMVYIL).

The protein belongs to the Ca(2+):cation antiporter (CaCA) (TC 2.A.19) family.

The protein localises to the cell membrane. Its function is as follows. May function as a sodium/calcium exchanger (NCX) and participate in the maintenance of calcium homeostasis. May play a role abiotic stress responses. The polypeptide is Sodium/calcium exchanger NCL2 (Oryza sativa subsp. japonica (Rice)).